The primary structure comprises 278 residues: HTH-type transcriptional regulator HdfR (278 aa).

Residues 1 to 58 (MDTELLKTFLEVSRTRHFGRAAEALYLTQSAVSFRIRQLENQLGVNLFTRHRNNIRLT) form the HTH lysR-type domain. A DNA-binding region (H-T-H motif) is located at residues 18 to 37 (FGRAAEALYLTQSAVSFRIR).

It belongs to the LysR transcriptional regulatory family.

Functionally, negatively regulates the transcription of the flagellar master operon flhDC by binding to the upstream region of the operon. In Salmonella dublin (strain CT_02021853), this protein is HTH-type transcriptional regulator HdfR.